The sequence spans 454 residues: MDKRIFGIETEFGISYSSPDSRPLAPEEVARYLFRKVVSWGRSSNVFLTNGSRLYLDVGSHPEYATAECDDLAQLIAHDRAGELILDDLVDEAQARLAAEGFNGTVYLFKNNTDSAGNSYGSHENYLIPRRGEFSRLAEILIPFLVTRQLIAGAGKVLKTPHGATFAFSQRADHIWEGVSSATTRSRPIINTRDEPHADAEFYRRLHVIVGDSNMSETSALLKVGTVDLILRMIEAGVIMRDMRMENPIRSIREISHDLTGRALVRLANGRQLTALDIQREYLNKVTDFVATNGAHNAHVPLILDLWQRTLDAIESGDTSTIDTEVDWAIKKKLMDGYMRRHDLSLDSPRIAQLDLTYHDISRQRGIFFLLQARGQARRLVTETDVKDAVDAPPQTTRAKLRGDFVRRAQELGRDYTVDWVHLKLNDRAHQTILCKDPFRSVDERVDALLDSMG.

Residue Glu-9 participates in Mg(2+) binding. Position 53 (Arg-53) interacts with ATP. Residue Tyr-55 participates in Mg(2+) binding. The active-site Proton acceptor is Asp-57. Residue Glu-63 coordinates Mg(2+). Positions 66 and 420 each coordinate ATP.

This sequence belongs to the Pup ligase/Pup deamidase family. Pup-conjugating enzyme subfamily.

The enzyme catalyses ATP + [prokaryotic ubiquitin-like protein]-L-glutamate + [protein]-L-lysine = ADP + phosphate + N(6)-([prokaryotic ubiquitin-like protein]-gamma-L-glutamyl)-[protein]-L-lysine.. It functions in the pathway protein degradation; proteasomal Pup-dependent pathway. Its pathway is protein modification; protein pupylation. Functionally, catalyzes the covalent attachment of the prokaryotic ubiquitin-like protein modifier Pup to the proteasomal substrate proteins, thereby targeting them for proteasomal degradation. This tagging system is termed pupylation. The ligation reaction involves the side-chain carboxylate of the C-terminal glutamate of Pup and the side-chain amino group of a substrate lysine. This is Pup--protein ligase from Paenarthrobacter aurescens (strain TC1).